A 223-amino-acid polypeptide reads, in one-letter code: Endonuclease NucS (223 aa).

Belongs to the NucS endonuclease family.

It localises to the cytoplasm. Its function is as follows. Cleaves both 3' and 5' ssDNA extremities of branched DNA structures. This is Endonuclease NucS from Mycobacterium marinum (strain ATCC BAA-535 / M).